The chain runs to 121 residues: Fluoride-specific ion channel FluC 3 (121 aa).

Transmembrane regions (helical) follow at residues 3–23, 40–60, 69–89, and 101–121; these read VFLP…RYLL, FTIN…ALGG, VLAT…NEMV, and AAYL…GFLV. Positions 76 and 79 each coordinate Na(+).

It belongs to the fluoride channel Fluc/FEX (TC 1.A.43) family.

It is found in the cell membrane. The catalysed reaction is fluoride(in) = fluoride(out). Na(+) is not transported, but it plays an essential structural role and its presence is essential for fluoride channel function. Its function is as follows. Fluoride-specific ion channel. Important for reducing fluoride concentration in the cell, thus reducing its toxicity. This is Fluoride-specific ion channel FluC 3 from Bifidobacterium longum (strain NCC 2705).